Reading from the N-terminus, the 437-residue chain is Chromosomal replication initiator protein DnaA (437 aa).

Residues 1-67 (MKNKIIASLK…KVVKDILGKD (67 aa)) are domain I, interacts with DnaA modulators. Residues 67–97 (DATYEITFKEIPYETKVESGPLIKKRPLLIT) form a domain II region. Positions 98 to 313 (PLNPKYTFEN…GAILRLIAYR (216 aa)) are domain III, AAA+ region. G141, G143, K144, and T145 together coordinate ATP. Residues 314–437 (NLYGTLNLSI…SKGFAQGESM (124 aa)) form a domain IV, binds dsDNA region.

This sequence belongs to the DnaA family. As to quaternary structure, oligomerizes as a right-handed, spiral filament on DNA at oriC.

It is found in the cytoplasm. Its function is as follows. Plays an essential role in the initiation and regulation of chromosomal replication. ATP-DnaA binds to the origin of replication (oriC) to initiate formation of the DNA replication initiation complex once per cell cycle. Binds the DnaA box (a 9 base pair repeat at the origin) and separates the double-stranded (ds)DNA. Forms a right-handed helical filament on oriC DNA; dsDNA binds to the exterior of the filament while single-stranded (ss)DNA is stabiized in the filament's interior. The ATP-DnaA-oriC complex binds and stabilizes one strand of the AT-rich DNA unwinding element (DUE), permitting loading of DNA polymerase. After initiation quickly degrades to an ADP-DnaA complex that is not apt for DNA replication. Binds acidic phospholipids. In Thermosipho melanesiensis (strain DSM 12029 / CIP 104789 / BI429), this protein is Chromosomal replication initiator protein DnaA.